Consider the following 62-residue polypeptide: Translational regulator CsrA (62 aa).

Belongs to the CsrA/RsmA family. In terms of assembly, homodimer; the beta-strands of each monomer intercalate to form a hydrophobic core, while the alpha-helices form wings that extend away from the core.

The protein resides in the cytoplasm. A key translational regulator that binds mRNA to regulate translation initiation and/or mRNA stability. Mediates global changes in gene expression, shifting from rapid growth to stress survival by linking envelope stress, the stringent response and the catabolite repression systems. Usually binds in the 5'-UTR; binding at or near the Shine-Dalgarno sequence prevents ribosome-binding, repressing translation, binding elsewhere in the 5'-UTR can activate translation and/or stabilize the mRNA. Its function is antagonized by small RNA(s). This is Translational regulator CsrA from Haemophilus ducreyi (strain 35000HP / ATCC 700724).